The primary structure comprises 605 residues: Indole-3-acetic acid-amido synthetase GH3.8 (605 aa).

Residues Ser-115, Met-342–Ser-346, Tyr-365, Asp-421, and Arg-440 contribute to the AMP site.

Belongs to the IAA-amido conjugating enzyme family. As to expression, expressed in the inner floral organs (lodicules, stamens and carpels) and at lower levels in lemmas and paleas.

Functionally, catalyzes the synthesis of indole-3-acetic acid (IAA)-amino acid conjugates, providing a mechanism for the plant to cope with the presence of excessive free auxin. Produces more IAA-Asp levels than IAA-Ala levels in vitro. May participate in the activation of disease resistance by preventing the accumulation of free IAA, which reduces the expression of a group of auxin-responsive genes encoding expansins that control cell wall loosening and expansion. Contributes to late events in stamen and carpel differentiation, and influences floret fertility. This Oryza sativa subsp. indica (Rice) protein is Indole-3-acetic acid-amido synthetase GH3.8 (GH3.8).